The following is a 422-amino-acid chain: Replication factor C large subunit (422 aa).

Residue 63-70 (GPPGVGKT) coordinates ATP.

The protein belongs to the activator 1 small subunits family. RfcL subfamily. As to quaternary structure, heteromultimer composed of small subunits (RfcS) and large subunits (RfcL).

Part of the RFC clamp loader complex which loads the PCNA sliding clamp onto DNA. The chain is Replication factor C large subunit from Pyrobaculum arsenaticum (strain DSM 13514 / JCM 11321 / PZ6).